The primary structure comprises 647 residues: Neuronal PAS domain-containing protein 4-like (647 aa).

Positions 16 to 29 (KRFRSTKGASKARR) are basic motif; degenerate. In terms of domain architecture, bHLH spans 16 to 67 (KRFRSTKGASKARRDQMNSEIRNLRALLPISPEHRLSYLHSMSITCTYIRKS). The tract at residues 30–67 (DQMNSEIRNLRALLPISPEHRLSYLHSMSITCTYIRKS) is helix-loop-helix motif. 2 PAS domains span residues 117–181 (VLQA…SPSG) and 238–274 (SADM…HPDD).

In terms of assembly, heterodimer; efficient DNA binding requires dimerization with another bHLH protein. In terms of tissue distribution, specifically expressed in endothelial and hematopoietic precursor cells.

Its subcellular location is the nucleus. Transcription factor specifically expressed in endothelial and hematopoietic precursor cells that acts as a key regulator of the endothelial differentiation cascade. Acts as an early-response transcription factor that regulates the expression of early regulators of endothelial and haematopoietic differentiation, such as etv2 and tal1. This Danio rerio (Zebrafish) protein is Neuronal PAS domain-containing protein 4-like.